The primary structure comprises 228 residues: NAD(P)H-hydrate epimerase (228 aa).

Residues 9–209 (VRAVERLAHR…LLGLTPAFLA (201 aa)) enclose the YjeF N-terminal domain. Residue 53 to 57 (NNGGD) coordinates (6S)-NADPHX. Asn-54 and Asp-115 together coordinate K(+). Residues 119–125 (GIGLARP) and Asp-148 contribute to the (6S)-NADPHX site. Ser-151 is a binding site for K(+).

It belongs to the NnrE/AIBP family. The cofactor is K(+).

The enzyme catalyses (6R)-NADHX = (6S)-NADHX. It carries out the reaction (6R)-NADPHX = (6S)-NADPHX. In terms of biological role, catalyzes the epimerization of the S- and R-forms of NAD(P)HX, a damaged form of NAD(P)H that is a result of enzymatic or heat-dependent hydration. This is a prerequisite for the S-specific NAD(P)H-hydrate dehydratase to allow the repair of both epimers of NAD(P)HX. This is NAD(P)H-hydrate epimerase from Bordetella parapertussis (strain 12822 / ATCC BAA-587 / NCTC 13253).